The primary structure comprises 1107 residues: uncharacterized protein (1107 aa).

The span at 180–204 shows a compositional bias: low complexity; the sequence is SGNGSSGGNNNNNNNSLNNSNNSIG. Disordered stretches follow at residues 180 to 251 and 501 to 530; these read SGNG…SGNN and LMNINNNNNNNNSNNNNNNNDQNKDKDNQM. Gly residues predominate over residues 205–215; it reads SSGGNGGGGSN. Positions 219 to 237 are enriched in polar residues; the sequence is PSMSPQFTSISKTNSPQII. Low complexity-rich tracts occupy residues 238-251 and 501-521; these read NTSSNNLNSSSGNN and LMNINNNNNNNNSNNNNNNND. Coiled-coil stretches lie at residues 789–816 and 940–1012; these read KKDIIEHLTQRHNQYQSNINEDEQIYRE and NIDH…NMLK.

This is an uncharacterized protein from Dictyostelium discoideum (Social amoeba).